A 1615-amino-acid polypeptide reads, in one-letter code: Low-density lipoprotein receptor-related protein 5 (1615 aa).

The N-terminal stretch at 1-31 is a signal peptide; that stretch reads MEAAPPGPPWPLLLLLLLLLALCGCPAPAAA. The tract at residues 32–288 is beta-propeller 1; that stretch reads SPLLLFANRR…YSPMDIQVLS (257 aa). Topologically, residues 32–1384 are extracellular; that stretch reads SPLLLFANRR…PPSDDSPAHS (1353 aa). LDL-receptor class B repeat units lie at residues 75 to 119, 120 to 162, 163 to 206, 207 to 247, and 248 to 290; these read GAVY…DWVG, KKLY…DPAH, GYMY…DLEE, QKLY…TLSG, and DTLY…LSQE. Residues 78-81 form a YWTD 1 repeat; the sequence is YWTD. Residue Asn-93 is glycosylated (N-linked (GlcNAc...) asparagine). A YWTD 2 repeat occupies 123–126; the sequence is YWTD. N-linked (GlcNAc...) asparagine glycosylation is present at Asn-138. One copy of the YWTD 3 repeat lies at 166–169; that stretch reads YWTD. Residues 251–254 form a YWTD 4 repeat; the sequence is YWTD. In terms of domain architecture, EGF-like 1 spans 295–337; it reads FHTRCEEDNGGCSHLCLLSPSEPFYTCACPTGVQLQDNGRTCK. Intrachain disulfides connect Cys-299-Cys-310, Cys-306-Cys-321, and Cys-323-Cys-336. A beta-propeller 2 region spans residues 341–602; the sequence is EEVLLLARRT…AVNVAKVVGT (262 aa). 5 LDL-receptor class B repeats span residues 385-427, 428-470, 471-514, 515-557, and 558-600; these read GYVY…DWVA, RNLY…HPVM, GLMY…DLQE, GKLY…LGDF, and IYWT…AKVV. 2 YWTD repeats span residues 388–391 and 431–434; these read YWTD. An N-linked (GlcNAc...) asparagine glycan is attached at Asn-446. A YWTD 7 repeat occupies 474-477; it reads YWTD. Residue Asn-499 is glycosylated (N-linked (GlcNAc...) asparagine). Residues 559–562 form a YWTD 8 repeat; sequence YWTD. The EGF-like 2 domain occupies 601–641; sequence GTNPCADRNGGCSHLCFFTPHATRCGCPIGLELLSDMKTCI. 3 disulfides stabilise this stretch: Cys-605–Cys-616, Cys-612–Cys-625, and Cys-627–Cys-640. The interval 644 to 903 is beta-propeller 3; that stretch reads EAFLVFTSRA…VFHSSRQDGL (260 aa). LDL-receptor class B repeat units lie at residues 687 to 729, 730 to 772, 773 to 815, 816 to 855, and 856 to 898; these read NHIY…DWMG, KNLY…DPTK, GYIY…DYAD, QRLY…TQYS, and DYIY…FHSS. The YWTD 9 repeat unit spans residues 690-693; sequence YWTD. N-linked (GlcNAc...) asparagine glycosylation is present at Asn-705. YWTD repeat units follow at residues 819–822 and 859–862; these read YWTD. Asn-878 carries N-linked (GlcNAc...) asparagine glycosylation. Residues 902-942 form the EGF-like 3 domain; that stretch reads GLNDCMHNNGQCGQLCLAIPGGHRCGCASHYTLDPSSRNCS. 3 disulfide bridges follow: Cys-906–Cys-917, Cys-913–Cys-926, and Cys-928–Cys-941. The tract at residues 945-1212 is beta-propeller 4; sequence TTFLLFSQKS…AVEEVSLEEF (268 aa). LDL-receptor class B repeat units lie at residues 989 to 1035, 1036 to 1078, 1079 to 1123, 1124 to 1164, and 1165 to 1207; these read KFIY…DIYS, RTLF…NAER, GYLY…DNTL, GKLF…TILG, and KHLY…VEEV. One can recognise an EGF-like 4 domain in the interval 1213 to 1254; it reads SAHPCARDNGGCSHICIAKGDGTPRCSCPVHLVLLQNLLTCG. Cystine bridges form between Cys-1217/Cys-1228, Cys-1224/Cys-1238, Cys-1240/Cys-1253, Cys-1259/Cys-1273, Cys-1266/Cys-1286, Cys-1280/Cys-1295, Cys-1298/Cys-1310, Cys-1305/Cys-1323, Cys-1317/Cys-1332, Cys-1336/Cys-1348, Cys-1343/Cys-1361, and Cys-1355/Cys-1370. 3 LDL-receptor class A domains span residues 1258 to 1296, 1297 to 1333, and 1335 to 1371; these read TCSP…EGCP, VCSA…ADCD, and ICLP…LMCE. Residues 1385 to 1407 form a helical membrane-spanning segment; the sequence is SAIGPVIGIILSLFVMGGVYFVC. The Cytoplasmic segment spans residues 1408-1615; sequence QRVVCQRYAG…PPPSPCTDSS (208 aa). The segment at 1475–1501 is disordered; that stretch reads RNHVTGASSSSSSSTKATLYPPILNPP. A PPPSP motif A motif is present at residues 1500–1506; the sequence is PPPSPAT. Positions 1538-1545 match the PPPSP motif B motif; that stretch reads PPTTPCST. The tract at residues 1568 to 1615 is disordered; sequence SDSDPYPPPPTPHSQYLSAEDSCPPSPATERSYFHLFPPPPSPCTDSS. The PPPSP motif C signature appears at 1574-1581; it reads PPPPTPHS. A PPPSP motif D motif is present at residues 1591-1596; the sequence is PPSPAT. Positions 1604-1615 are enriched in pro residues; sequence FPPPPSPCTDSS. The PPPSP motif E signature appears at 1605-1612; it reads PPPPSPCT.

The protein belongs to the LDLR family. Homodimer; disulfide-linked. Forms phosphorylated oligomer aggregates on Wnt-signaling. Component of a Wnt-signaling complex that contains a WNT protein, a FZD protein and LRP5 or LRP6. Interacts with FZD8; the interaction is formed on WNT-binding and signaling. Interacts (via the phosphorylated PPPSP motif domains) with AXIN1; the interaction prevents inhibition of beta-catenin phosphorylation and signaling and is enhanced in the presence of GSK3B and WNT1 or WNT3A. Interacts (via beta-propeller regions 3 and 4) with DKK1; the interaction, enhanced by MESD and/or KREMEN, inhibits beta-catenin signaling by preventing GSK3-mediated phosphorylation of the PPPSP motifs and subsequent, AXIN1 binding. Interacts with MESD; the interaction prevents the formation of LRP5 aggregates, targets LRP5 to the plasma membrane and, when complexed with KREMEN2, increases DKK1 binding. Interacts with CSNK1E. Interacts with SOST; the interaction antagonizes canonical Wnt signaling. Interacts with APCDD1. Interacts with CAPRIN2. Phosphorylation of cytoplasmic PPPSP motifs regulates the signal transduction of the Wnt signaling pathway through acting as a docking site for AXIN1. In terms of tissue distribution, widely expressed, with the highest level of expression in the liver and in aorta.

It is found in the membrane. The protein localises to the endoplasmic reticulum. Acts as a coreceptor with members of the frizzled family of seven-transmembrane spanning receptors to transduce signal by Wnt proteins. Activates the canonical Wnt signaling pathway that controls cell fate determination and self-renewal during embryonic development and adult tissue regeneration. In particular, may play an important role in the development of the posterior patterning of the epiblast during gastrulation. During bone development, regulates osteoblast proliferation and differentiation thus determining bone mass. Mechanistically, the formation of the signaling complex between Wnt ligand, frizzled receptor and LRP5 coreceptor promotes the recruitment of AXIN1 to LRP5, stabilizing beta-catenin/CTNNB1 and activating TCF/LEF-mediated transcriptional programs. Acts as a coreceptor for non-Wnt proteins, such as norrin/NDP. Binding of norrin/NDP to frizzled 4/FZD4-LRP5 receptor complex triggers beta-catenin/CTNNB1-dependent signaling known to be required for retinal vascular development. Plays a role in controlling postnatal vascular regression in retina via macrophage-induced endothelial cell apoptosis. The protein is Low-density lipoprotein receptor-related protein 5 of Homo sapiens (Human).